The chain runs to 220 residues: V-set and transmembrane domain-containing protein 2-like protein (220 aa).

The signal sequence occupies residues 1 to 24 (MGAPLAAALGALHYLALFLQLGGA). The 118-residue stretch at 41–158 (ALFTETPHDM…DGGRGVPRVL (118 aa)) folds into the Ig-like domain. Cys62 and Cys142 are joined by a disulfide. The segment covering 165–180 (PAPPRAPRPRGQPPGE) has biased composition (pro residues). The disordered stretch occupies residues 165–220 (PAPPRAPRPRGQPPGEEPGRGPTLLFLIILPGTGSGTPREAEPHQPHAGGCPARQS).

This is V-set and transmembrane domain-containing protein 2-like protein (Vstm2l) from Mus musculus (Mouse).